The sequence spans 450 residues: MAHISFDSSNLTKFVHNNELGEMQAMVTAADKELREGTGAGNDFRGWLNLPTDYDKEEFARIKTAAKKIQDDSDVLVVIGIGGSYLGARAAIEFLHETFWSSLSREDRKFPQVVFAGNSISSSYVNDLIHLIGDRDFSVNIISKSGTTTEPSIAFRVFKERLIAKYGEEAAKGRIYATTDRKRGALKQEADAEGYETFVIPDDVGGRFTVLTPVGLLPIAVSGGDIDSLMKGAADAQNEYKDADLSKNEAYQYAAYRNILYRKGYTTEILENYEPNMAMFSEWWKQLMGESEGKDQKGIYPSSANFTTDLHSLGQYIQEGRRNLMETVVKVDNATSDVDIPKETENLDGLKYLEGKTMAQVNTKAFEGVIMAHVDGGVPNMVVNIPSQDAYTLGYTMYFFEAAVAISGYLNGINPFNQPGVEAYKNNMFALLGKPGYEELTKKLTARLSD.

The Proton donor role is filled by Glu-290. Residues His-311 and Lys-425 contribute to the active site.

This sequence belongs to the GPI family.

It localises to the cytoplasm. The enzyme catalyses alpha-D-glucose 6-phosphate = beta-D-fructose 6-phosphate. It functions in the pathway carbohydrate biosynthesis; gluconeogenesis. It participates in carbohydrate degradation; glycolysis; D-glyceraldehyde 3-phosphate and glycerone phosphate from D-glucose: step 2/4. Catalyzes the reversible isomerization of glucose-6-phosphate to fructose-6-phosphate. This Lactiplantibacillus plantarum (strain ATCC BAA-793 / NCIMB 8826 / WCFS1) (Lactobacillus plantarum) protein is Glucose-6-phosphate isomerase.